Consider the following 313-residue polypeptide: Serine/threonine-protein kinase SZE1 (313 aa).

The N-myristoyl glycine moiety is linked to residue Gly-2. The Protein kinase domain maps to 43–311 (MELGESLGYI…EVLDNLNAIA (269 aa)). ATP-binding positions include 49 to 57 (LGYINPKTL) and Lys-71.

It belongs to the protein kinase superfamily. Ser/Thr protein kinase family. Component of an immune signaling complex made of, at least, SZE1, BKN2/SZE2, ZAR1 and ZED1. Interacts directly with ZED1, ZAR1 and Pseudomonas syringae HOPZ1A at the plasma membrane. Post-translationally, N-terminal myristoylation is critical for plasma membrane localization and implication in defense responses. In terms of processing, autophosphorylated. In terms of tissue distribution, expressed in roots, seedlings, rosette leaves, floral organs, siliques and inflorescence stems.

The protein resides in the cell membrane. It carries out the reaction L-seryl-[protein] + ATP = O-phospho-L-seryl-[protein] + ADP + H(+). It catalyses the reaction L-threonyl-[protein] + ATP = O-phospho-L-threonyl-[protein] + ADP + H(+). In terms of biological role, together with BKN2/SZE2 and ZED1, required for effector-triggered immunity (e.g. Pseudomonas syringae effector type III HopZ1a) via the activation of ZAR1, thus being essential for resistance against P.syringae pv. tomato DC3000 expressing HopZ1a. This Arabidopsis thaliana (Mouse-ear cress) protein is Serine/threonine-protein kinase SZE1.